The primary structure comprises 322 residues: GTP 3',8-cyclase (322 aa).

Residues Ser5 to Lys217 enclose the Radical SAM core domain. Residue Arg14 participates in GTP binding. [4Fe-4S] cluster-binding residues include Cys21 and Cys25. Residue Tyr27 participates in S-adenosyl-L-methionine binding. Cys28 is a binding site for [4Fe-4S] cluster. GTP is bound at residue Arg64. Position 68 (Gly68) interacts with S-adenosyl-L-methionine. Thr95 lines the GTP pocket. Ser119 is a binding site for S-adenosyl-L-methionine. Position 155 (Lys155) interacts with GTP. Met189 lines the S-adenosyl-L-methionine pocket. Positions 249 and 252 each coordinate [4Fe-4S] cluster. Arg254–Arg256 is a binding site for GTP. Cys266 serves as a coordination point for [4Fe-4S] cluster.

This sequence belongs to the radical SAM superfamily. MoaA family. Monomer and homodimer. [4Fe-4S] cluster is required as a cofactor.

It catalyses the reaction GTP + AH2 + S-adenosyl-L-methionine = (8S)-3',8-cyclo-7,8-dihydroguanosine 5'-triphosphate + 5'-deoxyadenosine + L-methionine + A + H(+). It functions in the pathway cofactor biosynthesis; molybdopterin biosynthesis. Its function is as follows. Catalyzes the cyclization of GTP to (8S)-3',8-cyclo-7,8-dihydroguanosine 5'-triphosphate. This Campylobacter fetus subsp. fetus (strain 82-40) protein is GTP 3',8-cyclase.